Reading from the N-terminus, the 391-residue chain is uncharacterized protein (391 aa).

11 consecutive transmembrane segments (helical) span residues 15-35, 48-68, 81-101, 139-159, 167-187, 217-237, 251-271, 275-295, 303-323, 346-366, and 369-389; these read LSFCVVFLLRMLGIFSVLPIL, FLIGLAVGIYGATQIVFQIPF, IIFGLFIFFIGSLIVVSTNSI, IIGVSFAVSFLISVVSAPIIA, IFWISAVFSIFSILIVFFLIP, FYLGVFLLHFLLTMNFLIIPY, IVYFATIVFSFFFLFLIVFYF, FFLKNIIEICIFFIFLSLLLF, ICLTFALQIFFIAFNILEIFF, TSQFLGIACGGVLNGLLCTFF, and NHIFLFEIFITLIWFIFSFFC.

This sequence belongs to the major facilitator superfamily.

The protein localises to the cell membrane. This is an uncharacterized protein from Buchnera aphidicola subsp. Schizaphis graminum (strain Sg).